Here is a 466-residue protein sequence, read N- to C-terminus: Glutamate--tRNA ligase 1 (466 aa).

A 'HIGH' region motif is present at residues 9 to 19; the sequence is PSPTGMLHIGG. The 'KMSKS' region signature appears at 238-242; it reads KLSKR. Lysine 241 is an ATP binding site.

This sequence belongs to the class-I aminoacyl-tRNA synthetase family. Glutamate--tRNA ligase type 1 subfamily. In terms of assembly, monomer.

The protein localises to the cytoplasm. It carries out the reaction tRNA(Glu) + L-glutamate + ATP = L-glutamyl-tRNA(Glu) + AMP + diphosphate. Functionally, catalyzes the attachment of glutamate to tRNA(Glu) in a two-step reaction: glutamate is first activated by ATP to form Glu-AMP and then transferred to the acceptor end of tRNA(Glu). The polypeptide is Glutamate--tRNA ligase 1 (Acidiphilium cryptum (strain JF-5)).